A 425-amino-acid chain; its full sequence is Serine--tRNA ligase (425 aa).

Position 228-230 (228-230) interacts with L-serine; sequence TAE. 259–261 contacts ATP; the sequence is RSE. L-serine is bound at residue Glu-282. 346–349 lines the ATP pocket; the sequence is EIAS. L-serine is bound at residue Ser-382.

The protein belongs to the class-II aminoacyl-tRNA synthetase family. Type-1 seryl-tRNA synthetase subfamily. In terms of assembly, homodimer. The tRNA molecule binds across the dimer.

Its subcellular location is the cytoplasm. It carries out the reaction tRNA(Ser) + L-serine + ATP = L-seryl-tRNA(Ser) + AMP + diphosphate + H(+). The enzyme catalyses tRNA(Sec) + L-serine + ATP = L-seryl-tRNA(Sec) + AMP + diphosphate + H(+). Its pathway is aminoacyl-tRNA biosynthesis; selenocysteinyl-tRNA(Sec) biosynthesis; L-seryl-tRNA(Sec) from L-serine and tRNA(Sec): step 1/1. In terms of biological role, catalyzes the attachment of serine to tRNA(Ser). Is also able to aminoacylate tRNA(Sec) with serine, to form the misacylated tRNA L-seryl-tRNA(Sec), which will be further converted into selenocysteinyl-tRNA(Sec). The protein is Serine--tRNA ligase of Rickettsia africae (strain ESF-5).